Consider the following 107-residue polypeptide: Putative double-stranded DNA mimic protein YE2228 (107 aa).

Belongs to the putative dsDNA mimic protein family.

In terms of biological role, may act as a double-stranded DNA (dsDNA) mimic. Probably regulates the activity of a dsDNA-binding protein. The sequence is that of Putative double-stranded DNA mimic protein YE2228 from Yersinia enterocolitica serotype O:8 / biotype 1B (strain NCTC 13174 / 8081).